The chain runs to 276 residues: Rho-related protein racO (276 aa).

A GTP-binding site is contributed by 11 to 18 (GDGLIGKT). The short motif at 34–42 (YSSFDSEYL) is the Effector region element. GTP-binding positions include 60–64 (ENDGF) and 124–127 (IKTD). Residues 199–276 (FKNNNNNNNY…NKTTNKCKIS (78 aa)) form a disordered region. A compositionally biased stretch (low complexity) spans 200-270 (KNNNNNNNYN…SYKNHNNKTT (71 aa)). Cysteine methyl ester is present on C273. Residue C273 is the site of S-geranylgeranyl cysteine attachment. Residues 274 to 276 (KIS) constitute a propeptide, removed in mature form.

This sequence belongs to the small GTPase superfamily. Rho family.

The protein localises to the cell membrane. The protein is Rho-related protein racO (racO) of Dictyostelium discoideum (Social amoeba).